We begin with the raw amino-acid sequence, 585 residues long: Proline--tRNA ligase (585 aa).

It belongs to the class-II aminoacyl-tRNA synthetase family. ProS type 1 subfamily. Homodimer.

Its subcellular location is the cytoplasm. The enzyme catalyses tRNA(Pro) + L-proline + ATP = L-prolyl-tRNA(Pro) + AMP + diphosphate. Catalyzes the attachment of proline to tRNA(Pro) in a two-step reaction: proline is first activated by ATP to form Pro-AMP and then transferred to the acceptor end of tRNA(Pro). As ProRS can inadvertently accommodate and process non-cognate amino acids such as alanine and cysteine, to avoid such errors it has two additional distinct editing activities against alanine. One activity is designated as 'pretransfer' editing and involves the tRNA(Pro)-independent hydrolysis of activated Ala-AMP. The other activity is designated 'posttransfer' editing and involves deacylation of mischarged Ala-tRNA(Pro). The misacylated Cys-tRNA(Pro) is not edited by ProRS. The polypeptide is Proline--tRNA ligase (Nocardia farcinica (strain IFM 10152)).